We begin with the raw amino-acid sequence, 477 residues long: Glycogen synthase (477 aa).

K15 provides a ligand contact to ADP-alpha-D-glucose.

This sequence belongs to the glycosyltransferase 1 family. Bacterial/plant glycogen synthase subfamily.

The catalysed reaction is [(1-&gt;4)-alpha-D-glucosyl](n) + ADP-alpha-D-glucose = [(1-&gt;4)-alpha-D-glucosyl](n+1) + ADP + H(+). Its pathway is glycan biosynthesis; glycogen biosynthesis. Functionally, synthesizes alpha-1,4-glucan chains using ADP-glucose. The sequence is that of Glycogen synthase from Klebsiella pneumoniae (strain 342).